The sequence spans 173 residues: Photosystem I assembly protein Ycf3 (173 aa).

TPR repeat units follow at residues alanine 35–proline 68, serine 72–leucine 105, and glycine 120–asparagine 153.

This sequence belongs to the Ycf3 family.

It is found in the plastid. Its subcellular location is the chloroplast thylakoid membrane. In terms of biological role, essential for the assembly of the photosystem I (PSI) complex. May act as a chaperone-like factor to guide the assembly of the PSI subunits. The polypeptide is Photosystem I assembly protein Ycf3 (Cyanidium caldarium (Red alga)).